The sequence spans 321 residues: Tetraacyldisaccharide 4'-kinase (321 aa).

An ATP-binding site is contributed by 54 to 61 (SVGGTGKT).

This sequence belongs to the LpxK family.

The catalysed reaction is a lipid A disaccharide + ATP = a lipid IVA + ADP + H(+). The protein operates within glycolipid biosynthesis; lipid IV(A) biosynthesis; lipid IV(A) from (3R)-3-hydroxytetradecanoyl-[acyl-carrier-protein] and UDP-N-acetyl-alpha-D-glucosamine: step 6/6. Functionally, transfers the gamma-phosphate of ATP to the 4'-position of a tetraacyldisaccharide 1-phosphate intermediate (termed DS-1-P) to form tetraacyldisaccharide 1,4'-bis-phosphate (lipid IVA). The polypeptide is Tetraacyldisaccharide 4'-kinase (Rickettsia peacockii (strain Rustic)).